The chain runs to 310 residues: Methionyl-tRNA formyltransferase (310 aa).

112–115 lines the (6S)-5,6,7,8-tetrahydrofolate pocket; the sequence is SLLP.

It belongs to the Fmt family.

It carries out the reaction L-methionyl-tRNA(fMet) + (6R)-10-formyltetrahydrofolate = N-formyl-L-methionyl-tRNA(fMet) + (6S)-5,6,7,8-tetrahydrofolate + H(+). Attaches a formyl group to the free amino group of methionyl-tRNA(fMet). The formyl group appears to play a dual role in the initiator identity of N-formylmethionyl-tRNA by promoting its recognition by IF2 and preventing the misappropriation of this tRNA by the elongation apparatus. The sequence is that of Methionyl-tRNA formyltransferase from Pelagibacter ubique (strain HTCC1062).